The following is a 394-amino-acid chain: MDFPLANLFFVPSEDATAFGRRLRAAAQQAPIVFDTAFGMPILLRKSHITTAYRDTATFSTRMFQAGILNGGLAAMQGDEHARMRRVYNMFFLPRAVSQYEERFVRPISEQVVDRLAGKPRVDLLEDFAMELPRRVIGELFGFPAEKLHETDERVRAMLRGLVRMHDPAAVAESQRAYGETLGLITEVVERESRDTSDTLLGEILRTLKAEHMDTIEASRQIVLSLILGGYETTSWLVANTIHALLAHPDTLARVRQDPSLLPAAIEEGMRWCPSSFGVLRMVERDVRLDDQALSAGTVVCLAGIAGNYDETAYPSPEVYDIDRKPLPAANVFGGGAHFCVGAPLARMEARVGLQALLARFPGLRAVPEERPSFMYGAKDSVAHGPDKLPVLLH.

Positions 81, 85, 281, 335, 338, and 340 each coordinate heme b.

Belongs to the cytochrome P450 family. Heme b is required as a cofactor.

It carries out the reaction testosterone + 2 reduced [2Fe-2S]-[ferredoxin] + O2 + 2 H(+) = 1alpha-hydroxytestosterone + 2 oxidized [2Fe-2S]-[ferredoxin] + H2O. The enzyme catalyses androst-4-ene-3,17-dione + 2 reduced [2Fe-2S]-[ferredoxin] + O2 + 2 H(+) = 1alpha-hydroxyandrost-4-ene-3,17-dione + 2 oxidized [2Fe-2S]-[ferredoxin] + H2O. In terms of biological role, hydroxylase that can catalyze the in vitro conversion of the sesquiterpenoid nootkatone, a natural organic compound produced by some plants, to at least five hydrophilic products. The native ferredoxin reductase FdR_B and either Fdx2 or Fdx8 ferredoxins can act as the redox partners for the conversion of nootkatone. In addition, acts as a steroid 1alpha-hydroxylase, when associated in vitro with the surrogate redox partners bovine adrenodoxin (Adx) and adrenodoxin reductase (Adr). Acts on several C-19 steroid substrates, including testosterone and androstenedione, which are hydroxylated to 1alpha-hydroxytestosterone and 1alpha-hydroxyandrostenedione, respectively. Can use their derivatives testosterone-acetate and 11-oxoandrostenedione, but not vitamin D3 and 25-hydroxyvitamin D3. Also catalyzes the hydroxylation of the C-21 steroid 11-deoxycorticosterone to 1alpha-hydroxy-11-deoxycorticosterone. Catalyzes the hydroxylation of the C-21 steroid progesterone, leading to the formation of seven products: two major (1alpha-hydroxyprogesterone and 17alpha-hydroxyprogesterone) and five minor products. The chain is C-19 steroid 1alpha-hydroxylase from Sorangium cellulosum (strain So ce56) (Polyangium cellulosum (strain So ce56)).